The chain runs to 341 residues: Protein P3 (341 aa).

Residues 46–175 (RARQAANPVS…QTKNAPDANE (130 aa)) are disordered. A compositionally biased stretch (basic residues) spans 97-116 (KSKRAVRREKRRTAAKKATN). Residues 142–152 (SYLSSLLSSPS) show a composition bias toward low complexity.

It belongs to the nepovirus protein P3 family.

The chain is Protein P3 from Vitis rupestris (Grape).